A 230-amino-acid chain; its full sequence is Sugar fermentation stimulation protein homolog (230 aa).

Belongs to the SfsA family.

This chain is Sugar fermentation stimulation protein homolog, found in Clostridium perfringens (strain ATCC 13124 / DSM 756 / JCM 1290 / NCIMB 6125 / NCTC 8237 / Type A).